A 31-amino-acid chain; its full sequence is Cytochrome b6-f complex subunit 6 (31 aa).

Residues 3-23 (ALIGYILLMTLMFSLAAGLYF) form a helical membrane-spanning segment.

The protein belongs to the PetL family. As to quaternary structure, the 4 large subunits of the cytochrome b6-f complex are cytochrome b6, subunit IV (17 kDa polypeptide, PetD), cytochrome f and the Rieske protein, while the 4 small subunits are PetG, PetL, PetM and PetN. The complex functions as a dimer.

The protein resides in the plastid. Its subcellular location is the chloroplast thylakoid membrane. In terms of biological role, component of the cytochrome b6-f complex, which mediates electron transfer between photosystem II (PSII) and photosystem I (PSI), cyclic electron flow around PSI, and state transitions. PetL is important for photoautotrophic growth as well as for electron transfer efficiency and stability of the cytochrome b6-f complex. This chain is Cytochrome b6-f complex subunit 6, found in Emiliania huxleyi (Coccolithophore).